A 453-amino-acid polypeptide reads, in one-letter code: GTPase Der (453 aa).

2 consecutive EngA-type G domains span residues 4 to 169 and 178 to 353; these read PVVA…PPTD and INVA…EQHR. Residues 10-17, 57-61, 120-123, 184-191, 231-235, and 296-299 each bind GTP; these read GRPNVGKS, DTGGL, NKCE, DTAGI, and NKWD. The 86-residue stretch at 354 to 439 folds into the KH-like domain; the sequence is RRVSTSVINE…PIRLLWRGKK (86 aa).

The protein belongs to the TRAFAC class TrmE-Era-EngA-EngB-Septin-like GTPase superfamily. EngA (Der) GTPase family. In terms of assembly, associates with the 50S ribosomal subunit.

Its function is as follows. GTPase that plays an essential role in the late steps of ribosome biogenesis. This chain is GTPase Der, found in Cyanothece sp. (strain PCC 7425 / ATCC 29141).